A 535-amino-acid polypeptide reads, in one-letter code: UDP-N-acetylmuramoyl-L-alanyl-D-glutamate--2,6-diaminopimelate ligase (535 aa).

Leu-67 is a binding site for UDP-N-acetyl-alpha-D-muramoyl-L-alanyl-D-glutamate. 153–159 (GTSGKTT) contacts ATP. UDP-N-acetyl-alpha-D-muramoyl-L-alanyl-D-glutamate-binding positions include 195–196 (TT), Ser-222, and Arg-230. Lys-262 carries the N6-carboxylysine modification. Meso-2,6-diaminopimelate is bound by residues Arg-424, 448–451 (DNPR), Gly-502, and Glu-506. The short motif at 448-451 (DNPR) is the Meso-diaminopimelate recognition motif element.

Belongs to the MurCDEF family. MurE subfamily. The cofactor is Mg(2+). Carboxylation is probably crucial for Mg(2+) binding and, consequently, for the gamma-phosphate positioning of ATP.

The protein resides in the cytoplasm. It catalyses the reaction UDP-N-acetyl-alpha-D-muramoyl-L-alanyl-D-glutamate + meso-2,6-diaminopimelate + ATP = UDP-N-acetyl-alpha-D-muramoyl-L-alanyl-gamma-D-glutamyl-meso-2,6-diaminopimelate + ADP + phosphate + H(+). It participates in cell wall biogenesis; peptidoglycan biosynthesis. Its function is as follows. Catalyzes the addition of meso-diaminopimelic acid to the nucleotide precursor UDP-N-acetylmuramoyl-L-alanyl-D-glutamate (UMAG) in the biosynthesis of bacterial cell-wall peptidoglycan. The sequence is that of UDP-N-acetylmuramoyl-L-alanyl-D-glutamate--2,6-diaminopimelate ligase from Mycobacterium bovis (strain ATCC BAA-935 / AF2122/97).